Consider the following 413-residue polypeptide: Tyrosine--tRNA ligase (413 aa).

The 'HIGH' region signature appears at 59-68 (PTAPDIHLGH). Residues 243–247 (KMSKS) carry the 'KMSKS' region motif. Lysine 246 is a binding site for ATP. Residues 351-411 (LAIGQLLKQA…GKRRFARVTL (61 aa)) enclose the S4 RNA-binding domain.

This sequence belongs to the class-I aminoacyl-tRNA synthetase family. TyrS type 2 subfamily. Homodimer.

Its subcellular location is the cytoplasm. The catalysed reaction is tRNA(Tyr) + L-tyrosine + ATP = L-tyrosyl-tRNA(Tyr) + AMP + diphosphate + H(+). Catalyzes the attachment of tyrosine to tRNA(Tyr) in a two-step reaction: tyrosine is first activated by ATP to form Tyr-AMP and then transferred to the acceptor end of tRNA(Tyr). This chain is Tyrosine--tRNA ligase, found in Burkholderia thailandensis (strain ATCC 700388 / DSM 13276 / CCUG 48851 / CIP 106301 / E264).